The following is a 156-amino-acid chain: Small ribosomal subunit protein uS7 (156 aa).

The protein belongs to the universal ribosomal protein uS7 family. Part of the 30S ribosomal subunit. Contacts proteins S9 and S11.

Functionally, one of the primary rRNA binding proteins, it binds directly to 16S rRNA where it nucleates assembly of the head domain of the 30S subunit. Is located at the subunit interface close to the decoding center, probably blocks exit of the E-site tRNA. The protein is Small ribosomal subunit protein uS7 of Klebsiella pneumoniae subsp. pneumoniae (strain ATCC 700721 / MGH 78578).